A 110-amino-acid polypeptide reads, in one-letter code: MEVLAKHRFARTSPQKARLVADQIRGLPVAKALEILTFSPKKAAVLVKKVVDSAIANAEHNEGADIDDLKIAKVFVDEGPTMKRIMPRAKGRADRIIKRTSHITVVVSDR.

This sequence belongs to the universal ribosomal protein uL22 family. As to quaternary structure, part of the 50S ribosomal subunit.

This protein binds specifically to 23S rRNA; its binding is stimulated by other ribosomal proteins, e.g. L4, L17, and L20. It is important during the early stages of 50S assembly. It makes multiple contacts with different domains of the 23S rRNA in the assembled 50S subunit and ribosome. Functionally, the globular domain of the protein is located near the polypeptide exit tunnel on the outside of the subunit, while an extended beta-hairpin is found that lines the wall of the exit tunnel in the center of the 70S ribosome. The polypeptide is Large ribosomal subunit protein uL22 (Shewanella amazonensis (strain ATCC BAA-1098 / SB2B)).